The sequence spans 219 residues: Putative protease Do-like 6, chloroplastic (219 aa).

The transit peptide at 1–45 (MLFRSVHHIVARFSNSTSTPIHRFFYSPSLLRRRSSFNASLISRC) directs the protein to the chloroplast. Residues 61–216 (KIFSFSREPN…YSGQINKKIY (156 aa)) form a serine protease region. Residues H99, D130, and S208 each act as charge relay system in the active site.

The protein belongs to the peptidase S1B family.

The protein resides in the plastid. Its subcellular location is the chloroplast. Its function is as follows. Putative serine protease. The sequence is that of Putative protease Do-like 6, chloroplastic (DEGP6) from Arabidopsis thaliana (Mouse-ear cress).